Reading from the N-terminus, the 497-residue chain is uncharacterized protein (497 aa).

Residues 44–74 (IRQEKEMKRHDDDGRQYQSDRKFAKSKHDDI) show a composition bias toward basic and acidic residues. Disordered regions lie at residues 44 to 95 (IRQE…SVGR), 120 to 151 (VSRSSSIGHSGSTAPWSSVGRHNRKKDNEHRD), and 195 to 227 (GNVITPGVTSTTGAPSGKASLSRAASNSSTSAR). A compositionally biased stretch (low complexity) spans 120-131 (VSRSSSIGHSGS). Phosphoserine occurs at positions 123, 125, and 131. Position 132 is a phosphothreonine (Thr-132). Residues 213–227 (ASLSRAASNSSTSAR) show a composition bias toward low complexity. Phosphothreonine is present on Thr-258. Ser-310 is modified (phosphoserine). A compositionally biased stretch (polar residues) spans 367–385 (NVNPSNQDLASVKQPSGFS). The tract at residues 367 to 497 (NVNPSNQDLA…GFPDTSRPPH (131 aa)) is disordered. Positions 400-409 (NFSNDDSSFF) are enriched in low complexity. The residue at position 436 (Ser-436) is a Phosphoserine. Over residues 448-472 (GLSSGASIPSAPPGFGYQQPSFPYS) the composition is skewed to low complexity.

The protein localises to the cytoplasm. It is found in the nucleus. This is an uncharacterized protein from Schizosaccharomyces pombe (strain 972 / ATCC 24843) (Fission yeast).